Here is a 146-residue protein sequence, read N- to C-terminus: Putative pre-16S rRNA nuclease (146 aa).

The protein belongs to the YqgF nuclease family.

The protein localises to the cytoplasm. Functionally, could be a nuclease involved in processing of the 5'-end of pre-16S rRNA. The chain is Putative pre-16S rRNA nuclease from Methylobacillus flagellatus (strain ATCC 51484 / DSM 6875 / VKM B-1610 / KT).